Consider the following 300-residue polypeptide: Porphobilinogen deaminase (300 aa).

At Cys239 the chain carries S-(dipyrrolylmethanemethyl)cysteine.

This sequence belongs to the HMBS family. As to quaternary structure, monomer. Dipyrromethane is required as a cofactor.

The catalysed reaction is 4 porphobilinogen + H2O = hydroxymethylbilane + 4 NH4(+). It functions in the pathway porphyrin-containing compound metabolism; protoporphyrin-IX biosynthesis; coproporphyrinogen-III from 5-aminolevulinate: step 2/4. Functionally, tetrapolymerization of the monopyrrole PBG into the hydroxymethylbilane pre-uroporphyrinogen in several discrete steps. The sequence is that of Porphobilinogen deaminase from Francisella tularensis subsp. tularensis (strain WY96-3418).